The following is a 417-amino-acid chain: NADH-quinone oxidoreductase subunit D (417 aa).

Belongs to the complex I 49 kDa subunit family. NDH-1 is composed of 14 different subunits. Subunits NuoB, C, D, E, F, and G constitute the peripheral sector of the complex.

It is found in the cell inner membrane. The enzyme catalyses a quinone + NADH + 5 H(+)(in) = a quinol + NAD(+) + 4 H(+)(out). Functionally, NDH-1 shuttles electrons from NADH, via FMN and iron-sulfur (Fe-S) centers, to quinones in the respiratory chain. The immediate electron acceptor for the enzyme in this species is believed to be ubiquinone. Couples the redox reaction to proton translocation (for every two electrons transferred, four hydrogen ions are translocated across the cytoplasmic membrane), and thus conserves the redox energy in a proton gradient. In Aromatoleum aromaticum (strain DSM 19018 / LMG 30748 / EbN1) (Azoarcus sp. (strain EbN1)), this protein is NADH-quinone oxidoreductase subunit D.